Consider the following 450-residue polypeptide: UDP-N-acetylmuramoylalanine--D-glutamate ligase (450 aa).

ATP is bound at residue 119-125 (GSNGKTT).

Belongs to the MurCDEF family.

The protein resides in the cytoplasm. It catalyses the reaction UDP-N-acetyl-alpha-D-muramoyl-L-alanine + D-glutamate + ATP = UDP-N-acetyl-alpha-D-muramoyl-L-alanyl-D-glutamate + ADP + phosphate + H(+). The protein operates within cell wall biogenesis; peptidoglycan biosynthesis. Cell wall formation. Catalyzes the addition of glutamate to the nucleotide precursor UDP-N-acetylmuramoyl-L-alanine (UMA). This is UDP-N-acetylmuramoylalanine--D-glutamate ligase from Streptococcus pneumoniae (strain ATCC 700669 / Spain 23F-1).